Consider the following 822-residue polypeptide: Probable RING finger protein 207 homolog (822 aa).

The segment at 8–42 (CTICKNEFEEPILLSCQHTTCRKCSTGSPSCKSCS) adopts an RING-type zinc-finger fold. A B box-type 1; atypical zinc finger spans residues 68–115 (EEMEECANCEQISLPMFYCETCQQSLCLVCRNVTHQARMFSSHKIISS). Residues C73, C76, C97, and H102 each contribute to the Zn(2+) site. The B box-type 2; degenerate zinc finger occupies 122 to 164 (YSSSLCKDHNEPYILYCSDVRKLVCIQCFNGRPLEERHSFISI). Coiled-coil stretches lie at residues 526-558 (NSQN…GQSA) and 738-769 (DKDE…KVSE).

The protein is Probable RING finger protein 207 homolog of Caenorhabditis elegans.